Here is a 941-residue protein sequence, read N- to C-terminus: Pre-mRNA-processing factor 6 (941 aa).

Residues 1-79 are disordered; it reads MNKKKKPFLG…DEDLNDTNYD (79 aa). Residues 39–65 are compositionally biased toward basic and acidic residues; sequence DANDPVDDRHAPPGKRTVGDQMKKNQA. The segment covering 66–78 has biased composition (acidic residues); it reads ADDDDEDLNDTNY. S143 carries the post-translational modification Phosphoserine. A phosphothreonine mark is found at T180, T266, and T275. The residue at position 279 (S279) is a Phosphoserine. 9 HAT repeats span residues 384–416, 418–444, 445–476, 554–586, 588–620, 622–654, 689–721, 723–755, and 855–887; these read TDIRAKKRVLRKALEHVPNSVRLWKAAVELEEP, DARIMLSRAVECCPTSVELWLALARLE, TYENARKVLNKARENIPTDRHIWITAAKLEEA, NALECARAIYAYALQVFPSKKSVWLRAAYFEKN, GTRESLEALLQRAVAHCPKAEVLWLMGAKSKWL, GDVPAARSILALAFQANPNSEEIWLAAVKLESE, GNITAAQELCEEALRHYEDFPKLWMMKGQIEEQ, ELMERAREAYNQGLKKCPHSTPLWLLLSRLEEK, and RKITKAREWFHRTVKIDSDLGDAWAFFYKFELQ.

As to quaternary structure, identified in the spliceosome B complex. Identified in the spliceosome C complex. Associates with the U5 snRNP particle. Component of the U4/U6-U5 tri-snRNP complex composed of the U4, U6 and U5 snRNAs and at least PRPF3, PRPF4, PRPF6, PRPF8, PRPF31, SNRNP200, TXNL4A, SNRNP40, DDX23, CD2BP2, PPIH, SNU13, EFTUD2, SART1 and USP39, LSm proteins LSm2-8 and Sm proteins. Interacts with ARAF1. Interacts with AR and NR3C1, but not ESR1, independently of the presence of hormones. Interacts with USH1G. Post-translationally, phosphorylated by PRP4K during spliceosome assembly.

Its subcellular location is the nucleus. It is found in the nucleoplasm. The protein localises to the nucleus speckle. Involved in pre-mRNA splicing as component of the U4/U6-U5 tri-snRNP complex, one of the building blocks of the spliceosome. Enhances dihydrotestosterone-induced transactivation activity of AR, as well as dexamethasone-induced transactivation activity of NR3C1, but does not affect estrogen-induced transactivation. This Rattus norvegicus (Rat) protein is Pre-mRNA-processing factor 6 (Prpf6).